The primary structure comprises 1112 residues: Phytochrome E (1112 aa).

The tract at residues 1-20 (MGFESSSSAASNMKPQPQKS) is disordered. In terms of domain architecture, GAF spans 217 to 387 (DIGALCDTVV…AFGLQLQMEL (171 aa)). C322 serves as a coordination point for phytochromobilin. PAS domains lie at 595-666 (FVCE…LQGE) and 732-803 (DYKT…LISL). The region spanning 877–1096 (YVRQEIKNPL…FFQVDLQVKT (220 aa)) is the Histidine kinase domain.

Belongs to the phytochrome family. Homodimer. Post-translationally, contains one covalently linked phytochromobilin chromophore.

Regulatory photoreceptor which exists in two forms that are reversibly interconvertible by light: the Pr form that absorbs maximally in the red region of the spectrum and the Pfr form that absorbs maximally in the far-red region. Photoconversion of Pr to Pfr induces an array of morphogenic responses, whereas reconversion of Pfr to Pr cancels the induction of those responses. Pfr controls the expression of a number of nuclear genes including those encoding the small subunit of ribulose-bisphosphate carboxylase, chlorophyll A/B binding protein, protochlorophyllide reductase, rRNA, etc. It also controls the expression of its own gene(s) in a negative feedback fashion. This chain is Phytochrome E (PHYE), found in Arabidopsis thaliana (Mouse-ear cress).